The following is a 117-amino-acid chain: Large ribosomal subunit protein bL19 (117 aa).

The protein belongs to the bacterial ribosomal protein bL19 family.

Functionally, this protein is located at the 30S-50S ribosomal subunit interface and may play a role in the structure and function of the aminoacyl-tRNA binding site. This Rhodopirellula baltica (strain DSM 10527 / NCIMB 13988 / SH1) protein is Large ribosomal subunit protein bL19.